The following is a 316-amino-acid chain: N-acetylmuramic acid 6-phosphate etherase (316 aa).

The tract at residues 1–25 (MAVFDPDLQPSSDRGHLLTEQSNQR) is disordered. Residues 66–229 (VANRLRAGGR…STAVMVKLGK (164 aa)) form the SIS domain. Glu94 serves as the catalytic Proton donor. Glu125 is a catalytic residue.

Belongs to the GCKR-like family. MurNAc-6-P etherase subfamily. Homodimer.

It carries out the reaction N-acetyl-D-muramate 6-phosphate + H2O = N-acetyl-D-glucosamine 6-phosphate + (R)-lactate. It functions in the pathway amino-sugar metabolism; N-acetylmuramate degradation. Its function is as follows. Specifically catalyzes the cleavage of the D-lactyl ether substituent of MurNAc 6-phosphate, producing GlcNAc 6-phosphate and D-lactate. In Synechococcus sp. (strain CC9605), this protein is N-acetylmuramic acid 6-phosphate etherase.